Reading from the N-terminus, the 78-residue chain is TauPI-stichotoxin-Hcr2b (78 aa).

An N-terminal signal peptide occupies residues 1-22 (MKGTFLICLILIAGFSFKSTQA). Residues 26–76 (CLEPKVVGPCTAYFRRFYFDSETGKCTVFIYGGCEGNGNNFETLRACRAIC) enclose the BPTI/Kunitz inhibitor domain. Intrachain disulfides connect cysteine 26/cysteine 76, cysteine 35/cysteine 59, and cysteine 51/cysteine 72.

This sequence belongs to the venom Kunitz-type family. Sea anemone type 2 potassium channel toxin subfamily.

The protein resides in the secreted. It is found in the nematocyst. In terms of biological role, this protease inhibitor shows two different activities, it inhibits both the capsaicin receptor TRPV1 and serine proteases. It partially (max 50%) and reversibly inhibits capsaicin-induced response of TRPV1 (IC(50)=54 nM), a receptor of the pain pathway. The second activity is a weak inhibition of trypsin and chymotrypsin activity (Ki=1 uM and Ki=5 uM, respectively). In vivo, it shows antinociceptive and analgesic activities. It significantly prolongs tail-flick latency and reduces capsaicin-induced acute pain. In vivo, unlike other TRPV1 antagonists whose activity is associated with hyperthermia, this protein has the remarkable feature of dropping core body temperature. This Radianthus crispa (Leathery sea anemone) protein is TauPI-stichotoxin-Hcr2b.